Here is a 923-residue protein sequence, read N- to C-terminus: Isoleucine--tRNA ligase (923 aa).

Positions 57–67 match the 'HIGH' region motif; that stretch reads PYANGHIHIGH. Residue glutamate 560 participates in L-isoleucyl-5'-AMP binding. The short motif at 601-605 is the 'KMSKS' region element; that stretch reads KMSKS. An ATP-binding site is contributed by lysine 604. 4 residues coordinate Zn(2+): cysteine 895, cysteine 898, cysteine 915, and cysteine 918.

The protein belongs to the class-I aminoacyl-tRNA synthetase family. IleS type 1 subfamily. In terms of assembly, monomer. Zn(2+) is required as a cofactor.

It localises to the cytoplasm. It carries out the reaction tRNA(Ile) + L-isoleucine + ATP = L-isoleucyl-tRNA(Ile) + AMP + diphosphate. In terms of biological role, catalyzes the attachment of isoleucine to tRNA(Ile). As IleRS can inadvertently accommodate and process structurally similar amino acids such as valine, to avoid such errors it has two additional distinct tRNA(Ile)-dependent editing activities. One activity is designated as 'pretransfer' editing and involves the hydrolysis of activated Val-AMP. The other activity is designated 'posttransfer' editing and involves deacylation of mischarged Val-tRNA(Ile). The protein is Isoleucine--tRNA ligase of Geobacter sulfurreducens (strain ATCC 51573 / DSM 12127 / PCA).